Here is a 202-residue protein sequence, read N- to C-terminus: Imidazoleglycerol-phosphate dehydratase (202 aa).

This sequence belongs to the imidazoleglycerol-phosphate dehydratase family.

It localises to the cytoplasm. It catalyses the reaction D-erythro-1-(imidazol-4-yl)glycerol 3-phosphate = 3-(imidazol-4-yl)-2-oxopropyl phosphate + H2O. It participates in amino-acid biosynthesis; L-histidine biosynthesis; L-histidine from 5-phospho-alpha-D-ribose 1-diphosphate: step 6/9. This chain is Imidazoleglycerol-phosphate dehydratase, found in Acinetobacter baylyi (strain ATCC 33305 / BD413 / ADP1).